Here is a 1006-residue protein sequence, read N- to C-terminus: D-2-hydroxyglutarate dehydrogenase (1006 aa).

Residues 47-279 (YQRLPQAAVF…VEAKLNVLPI (233 aa)) form the FAD-binding PCMH-type domain. Arg-397 and His-495 together coordinate (R)-2-hydroxyglutarate. The region spanning 655-687 (SHEVYDAMAGCLACKSCAGQCPIKVNVPDFRSR) is the 4Fe-4S ferredoxin-type domain. Cys-665, Cys-668, Cys-671, and Cys-675 together coordinate [4Fe-4S] cluster.

The protein in the N-terminal section; belongs to the FAD-binding oxidoreductase/transferase type 4 family. Requires [4Fe-4S] cluster as cofactor. FAD is required as a cofactor.

The catalysed reaction is (R)-2-hydroxyglutarate + A = 2-oxoglutarate + AH2. It functions in the pathway amino-acid degradation. In terms of biological role, catalyzes the oxidation of D-2-hydroxyglutarate (D-2-HGA) to 2-oxoglutarate. Is involved in a D-lysine catabolic pathway. The chain is D-2-hydroxyglutarate dehydrogenase from Pseudomonas putida (strain ATCC 47054 / DSM 6125 / CFBP 8728 / NCIMB 11950 / KT2440).